The primary structure comprises 318 residues: Taste receptor type 2 member 7 (318 aa).

The Extracellular segment spans residues 1–9 (MADKVQTTL). A helical membrane pass occupies residues 10 to 30 (LFLAVGEFSVGILGNAFIGLV). Topologically, residues 31–55 (NCMDWVKKRKIASIDLILTSLAISR) are cytoplasmic. The chain crosses the membrane as a helical span at residues 56-76 (ICLLCIILLDCFTLVLYPDVY). Topologically, residues 77–94 (ATGKEMRIIDFFWTLTNH) are extracellular. Residues 95–115 (LSIWFATCLSIYYFFKIGNFF) form a helical membrane-spanning segment. Residues 116 to 128 (HPLFLWMKWRIDR) are Cytoplasmic-facing. A helical transmembrane segment spans residues 129 to 149 (VISWILLGCVVLSVFISLPAT). Residues 150 to 187 (ENLNADFRFCVKAKRKTNLTWSCRVNKTQHASTKLFLN) lie on the Extracellular side of the membrane. N-linked (GlcNAc...) asparagine glycans are attached at residues N167 and N175. Residues 188–208 (LATLLPFCVCLMSFFLLILSL) traverse the membrane as a helical segment. Residues 209 to 235 (RRHIRRMQLSATGCRDPSTEAHVRALK) are Cytoplasmic-facing. The chain crosses the membrane as a helical span at residues 236–256 (AVISFLLLFIAYYLSFLIATS). Over 257-266 (SYFMPETELA) the chain is Extracellular. Residues 267-287 (VIFGESIALIYPSSHSFILIL) traverse the membrane as a helical segment. At 288-318 (GNNKLRYVSLKVIWKVMSILKGRKFQQHKQI) the chain is on the cytoplasmic side.

This sequence belongs to the G-protein coupled receptor T2R family.

The protein resides in the membrane. Its function is as follows. Gustducin-coupled receptor implicated in the perception of bitter compounds in the oral cavity and the gastrointestinal tract. Signals through PLCB2 and the calcium-regulated cation channel TRPM5. The sequence is that of Taste receptor type 2 member 7 (TAS2R7) from Gorilla gorilla gorilla (Western lowland gorilla).